The chain runs to 293 residues: F-box only protein 6 (293 aa).

The 48-residue stretch at 10–57 (LDSINELPENILLELFTHVPARQLLLNCRLVCSLWRDLIDLMTLWKRK) folds into the F-box domain. The region spanning 78 to 259 (FYFLRSLHRN…VTNSSIVVSP (182 aa)) is the FBA domain. Ser258 is subject to Phosphoserine. Polar residues predominate over residues 261 to 271 (MTRNQASSEAQ). The interval 261–285 (MTRNQASSEAQPGQKHGQEEAAQSP) is disordered. Ser284 is modified (phosphoserine).

Interacts with VCP. Part of a SCF (SKP1-cullin-F-box) protein ligase complex. Interacts with CHEK1 and CUL1.

The protein localises to the cytoplasm. It participates in protein modification; protein ubiquitination. Its function is as follows. Substrate-recognition component of some SCF (SKP1-CUL1-F-box protein)-type E3 ubiquitin ligase complexes. Involved in endoplasmic reticulum-associated degradation pathway (ERAD) for misfolded lumenal proteins by recognizing and binding sugar chains on unfolded glycoproteins that are retrotranslocated into the cytosol and promoting their ubiquitination and subsequent degradation. Able to recognize and bind denatured glycoproteins, which are modified with not only high-mannose but also complex-type oligosaccharides. Also recognizes sulfated glycans. Also involved in DNA damage response by specifically recognizing activated CHEK1 (phosphorylated on 'Ser-345'), promoting its ubiquitination and degradation. Ubiquitination of CHEK1 is required to ensure that activated CHEK1 does not accumulate as cells progress through S phase, or when replication forks encounter transient impediments during normal DNA replication. This Homo sapiens (Human) protein is F-box only protein 6 (FBXO6).